Consider the following 429-residue polypeptide: Enolase (429 aa).

Gln-165 lines the (2R)-2-phosphoglycerate pocket. The Proton donor role is filled by Glu-207. Residues Asp-244, Glu-287, and Asp-314 each coordinate Mg(2+). (2R)-2-phosphoglycerate contacts are provided by Lys-339, Arg-368, Ser-369, and Lys-390. The active-site Proton acceptor is Lys-339.

This sequence belongs to the enolase family. It depends on Mg(2+) as a cofactor.

It localises to the cytoplasm. The protein localises to the secreted. It is found in the cell surface. It catalyses the reaction (2R)-2-phosphoglycerate = phosphoenolpyruvate + H2O. Its pathway is carbohydrate degradation; glycolysis; pyruvate from D-glyceraldehyde 3-phosphate: step 4/5. Catalyzes the reversible conversion of 2-phosphoglycerate (2-PG) into phosphoenolpyruvate (PEP). It is essential for the degradation of carbohydrates via glycolysis. In Roseiflexus sp. (strain RS-1), this protein is Enolase.